The following is a 388-amino-acid chain: Mannitol-1-phosphate 5-dehydrogenase (388 aa).

Residue 5–16 (AVHFGGGNIGRG) coordinates NAD(+). The active site involves Lys213.

This sequence belongs to the mannitol dehydrogenase family. Monomer.

It carries out the reaction D-mannitol 1-phosphate + NAD(+) = beta-D-fructose 6-phosphate + NADH + H(+). Catalyzes the NAD(H)-dependent interconversion of D-fructose 6-phosphate and D-mannitol 1-phosphate in the mannitol metabolic pathway. The chain is Mannitol-1-phosphate 5-dehydrogenase from Ajellomyces capsulatus (strain NAm1 / WU24) (Darling's disease fungus).